The sequence spans 544 residues: Esterase P (544 aa).

Positions 1 to 19 (MSIFKRLLCLTLLWIAALE) are cleaved as a signal peptide. The N-linked (GlcNAc...) asparagine glycan is linked to N75. Residues C83 and C102 are joined by a disulfide bond. N114 carries an N-linked (GlcNAc...) asparagine glycan. S206 serves as the catalytic Acyl-ester intermediate. An intrachain disulfide couples C258 to C270. N-linked (GlcNAc...) asparagine glycosylation is found at N262 and N456. H466 (charge relay system) is an active-site residue. C514 and C535 are joined by a disulfide.

The protein belongs to the type-B carboxylesterase/lipase family. Monomer.

Its subcellular location is the secreted. It carries out the reaction a carboxylic ester + H2O = an alcohol + a carboxylate + H(+). In Drosophila melanogaster (Fruit fly), this protein is Esterase P (Est-P).